The sequence spans 258 residues: uncharacterized protein (258 aa).

Positions 1 to 23 (MVWCHYILLVLTFFLFTTFFTAA) are cleaved as a signal peptide. Over 24–64 (CPAIFTWLNSLFRLSNDSPHVVHTSIAEVGDIEDGRVDKDG) the chain is Cytoplasmic. Residues 65 to 85 (VLFVDLEFFLGCLPFFFFALV) traverse the membrane as a helical segment. Residues 86–123 (DQSSSSSVCKPLSPSDAKRSSNSLLRLSLVSSNDSDSS) lie on the Extracellular side of the membrane. An N-linked (GlcNAc...) asparagine glycan is attached at Asn118. Residues 124-144 (VSVSTFAFFFFFLFFLFFVFT) traverse the membrane as a helical segment. The Cytoplasmic segment spans residues 145 to 230 (CTFSSELTSS…SSSISFRISS (86 aa)). The chain crosses the membrane as a helical span at residues 231 to 251 (IFFLCSLVFMWFFNCFSDLNV). Over 252–258 (LLQIKHS) the chain is Extracellular.

It is found in the membrane. This is an uncharacterized protein from Saccharomyces cerevisiae (strain ATCC 204508 / S288c) (Baker's yeast).